Consider the following 181-residue polypeptide: Adenine phosphoribosyltransferase (181 aa).

The protein belongs to the purine/pyrimidine phosphoribosyltransferase family. As to quaternary structure, homodimer.

The protein resides in the cytoplasm. The catalysed reaction is AMP + diphosphate = 5-phospho-alpha-D-ribose 1-diphosphate + adenine. It functions in the pathway purine metabolism; AMP biosynthesis via salvage pathway; AMP from adenine: step 1/1. In terms of biological role, catalyzes a salvage reaction resulting in the formation of AMP, that is energically less costly than de novo synthesis. This is Adenine phosphoribosyltransferase from Rhizobium leguminosarum bv. trifolii (strain WSM2304).